Here is a 228-residue protein sequence, read N- to C-terminus: Lipoprotein-releasing system ATP-binding protein LolD (228 aa).

An ABC transporter domain is found at 6–228; it reads IKCLNVVKGY…EAGVLNKQGQ (223 aa). 42-49 serves as a coordination point for ATP; that stretch reads GASGSGKS.

The protein belongs to the ABC transporter superfamily. Lipoprotein translocase (TC 3.A.1.125) family. As to quaternary structure, the complex is composed of two ATP-binding proteins (LolD) and two transmembrane proteins (LolC and LolE).

The protein localises to the cell inner membrane. Its function is as follows. Part of the ABC transporter complex LolCDE involved in the translocation of mature outer membrane-directed lipoproteins, from the inner membrane to the periplasmic chaperone, LolA. Responsible for the formation of the LolA-lipoprotein complex in an ATP-dependent manner. The polypeptide is Lipoprotein-releasing system ATP-binding protein LolD (Saccharophagus degradans (strain 2-40 / ATCC 43961 / DSM 17024)).